The following is a 233-amino-acid chain: MSKRQDYIVAWMEVRGKRFEILVRPELAFRYKEKGDVDLEDVLWTDTIYRDVRKGLKASPEEVKKAFGTSDPRRVAEKILKEGEIQLTEEQRRRLLEAKRRQIISYIARNAIDPTTGRPIPEARIEAALEEVRFPINLWRDAESQAVEAVRLIARVMPIRLARALLEVKIPPPHSGRAYQALMRMGEVKKADWLPDGSLKAELEIPAGAQVEVTSRIQALARGAAEVKVKKVA.

The protein belongs to the SDO1/SBDS family.

The polypeptide is Ribosome maturation protein SDO1 homolog (Aeropyrum pernix (strain ATCC 700893 / DSM 11879 / JCM 9820 / NBRC 100138 / K1)).